Here is a 389-residue protein sequence, read N- to C-terminus: Cellobiose 2-epimerase (389 aa).

This sequence belongs to the cellobiose 2-epimerase family.

The catalysed reaction is D-cellobiose = beta-D-glucosyl-(1-&gt;4)-D-mannopyranose. Catalyzes the reversible epimerization of cellobiose to 4-O-beta-D-glucopyranosyl-D-mannose (Glc-Man). The protein is Cellobiose 2-epimerase of Ruminococcus albus (strain ATCC 27210 / DSM 20455 / JCM 14654 / NCDO 2250 / 7).